The chain runs to 353 residues: Fasciculation and elongation protein zeta-2 (353 aa).

A disordered region spans residues 19–49 (SLLDQENCNASPEPGAEAGAEAGGGADGFPA). Low complexity predominate over residues 28–38 (ASPEPGAEAGA). A phosphoserine mark is found at S135, S176, and S195. The stretch at 214–286 (KRLSVSELNE…AKKKKKLKNG (73 aa)) forms a coiled coil. The tract at residues 271–300 (KEHKETAKKKKKLKNGSSQNGKNERSHMPG) is disordered.

It belongs to the zygin family. In terms of assembly, homodimer; disulfide-linked. May form heterodimers with FEZ1. Interacts with synaptotagmin. Expressed in nonneural tissues, such as heart, lung, spleen, muscle, testis, placenta and melanocytes.

Functionally, involved in axonal outgrowth and fasciculation. This Homo sapiens (Human) protein is Fasciculation and elongation protein zeta-2 (FEZ2).